The chain runs to 152 residues: Transcriptional regulator MraZ (152 aa).

SpoVT-AbrB domains follow at residues 5–52 and 81–124; these read ATLV…PLPE and ASEC…DETT.

Belongs to the MraZ family. In terms of assembly, forms oligomers.

Its subcellular location is the cytoplasm. It is found in the nucleoid. Negatively regulates its own expression and that of the subsequent genes in the proximal part of the division and cell wall (dcw) gene cluster. Acts by binding directly to DNA. May also regulate the expression of genes outside the dcw cluster. This is Transcriptional regulator MraZ from Salmonella paratyphi A (strain ATCC 9150 / SARB42).